Reading from the N-terminus, the 1233-residue chain is Mitogen-activated protein kinase kinase kinase kinase 4 (1233 aa).

Ala2 bears the N-acetylalanine mark. Ser5 carries the post-translational modification Phosphoserine. Residues 25–289 enclose the Protein kinase domain; sequence FELVEVVGNG…EQLLKHPFIR (265 aa). ATP is bound by residues 31–39 and Lys53; that span reads VGNGTYGQV. Residue Asp152 is the Proton acceptor of the active site. Disordered regions lie at residues 305-348, 401-463, and 489-805; these read IDRT…VPGE, QKEQ…VERE, and QAML…ETES. Residues 316–337 show a composition bias toward acidic residues; it reads DETEYEYSGSEEEEEEVPEQEG. Phosphoserine occurs at positions 323 and 325. Basic and acidic residues predominate over residues 521-537; sequence PEPKPHYDPADRAREVQ. Position 543 is a phosphoserine (Ser543). Positions 544 to 559 are enriched in polar residues; that stretch reads LKNNVSPVSRSHSFSD. Residues Ser619, Ser621, Ser629, and Ser646 each carry the phosphoserine modification. Over residues 654-663 the composition is skewed to basic and acidic residues; that stretch reads LLWERVEKLV. The segment covering 666 to 692 has biased composition (low complexity); sequence PGSGSSSGSSNSGSQPGSHPGSQSGSG. A phosphoserine mark is found at Ser691, Ser703, and Ser706. Composition is skewed to basic and acidic residues over residues 713-726 and 741-756; these read SAAK…EVFR and KELR…HKVT. Acidic residues predominate over residues 766–781; sequence GTTDEEEEDVEQEGAD. The segment covering 783 to 803 has biased composition (polar residues); it reads STSGPEDTRAASSPNLSNGET. Phosphoserine is present on residues Ser785, Ser794, Ser795, Ser799, and Ser817. Thr822 is modified (phosphothreonine). Ser846, Ser849, Ser894, and Ser907 each carry phosphoserine. A mediates interaction with RAP2A region spans residues 852-1206; that stretch reads PFIDPRLLQI…LKFLCGRNDK (355 aa). Residues 920 to 1207 form the CNH domain; it reads NSEILCAALW…KFLCGRNDKV (288 aa).

Belongs to the protein kinase superfamily. STE Ser/Thr protein kinase family. STE20 subfamily. As to quaternary structure, interacts with the SH3 domain of the adapter proteins Nck. Interacts (via its CNH regulatory domain) with ATL1 (via the N-terminal region). Interacts with RAP2A (GTP-bound form preferentially). Mg(2+) is required as a cofactor. Appears to be ubiquitous, expressed in all tissue types examined. Highest levels observed in heart and brain.

Its subcellular location is the cytoplasm. It carries out the reaction L-seryl-[protein] + ATP = O-phospho-L-seryl-[protein] + ADP + H(+). The enzyme catalyses L-threonyl-[protein] + ATP = O-phospho-L-threonyl-[protein] + ADP + H(+). Serine/threonine kinase that plays a role in the response to environmental stress and cytokines such as TNF-alpha. Appears to act upstream of the JUN N-terminal pathway. Activator of the Hippo signaling pathway which plays a pivotal role in organ size control and tumor suppression by restricting proliferation and promoting apoptosis. MAP4Ks act in parallel to and are partially redundant with STK3/MST2 and STK4/MST2 in the phosphorylation and activation of LATS1/2, and establish MAP4Ks as components of the expanded Hippo pathway. Phosphorylates SMAD1 on Thr-322. The protein is Mitogen-activated protein kinase kinase kinase kinase 4 (Map4k4) of Mus musculus (Mouse).